The primary structure comprises 387 residues: Phosphoglycerate kinase (387 aa).

Substrate is bound by residues 21–23, Arg36, 59–62, Arg113, and Arg146; these read DLN and HLGR. ATP contacts are provided by residues Lys197, Glu314, and 340 to 343; that span reads GGDT.

It belongs to the phosphoglycerate kinase family. Monomer.

It localises to the cytoplasm. The enzyme catalyses (2R)-3-phosphoglycerate + ATP = (2R)-3-phospho-glyceroyl phosphate + ADP. The protein operates within carbohydrate degradation; glycolysis; pyruvate from D-glyceraldehyde 3-phosphate: step 2/5. The polypeptide is Phosphoglycerate kinase (Pseudomonas entomophila (strain L48)).